Consider the following 164-residue polypeptide: 2S seed storage protein 3 (164 aa).

The signal sequence occupies residues 1-21; it reads MANKLFLVCATLALCFLLTNA. Propeptides lie at residues 22-37 and 73-81; these read SIYR…DASN and GPSLDDEFD.

This sequence belongs to the 2S seed storage albumins family. In terms of assembly, the mature protein consists of a small and a large chain linked by disulfide bonds. Interacts with AHK2.

In terms of biological role, this is a 2S seed storage protein. The protein is 2S seed storage protein 3 (AT2S3) of Arabidopsis thaliana (Mouse-ear cress).